A 282-amino-acid chain; its full sequence is Probable ribosomal RNA small subunit methyltransferase A (282 aa).

Residues H24, L26, G51, E72, D100, and N115 each coordinate S-adenosyl-L-methionine.

It belongs to the class I-like SAM-binding methyltransferase superfamily. rRNA adenine N(6)-methyltransferase family. RsmA subfamily.

It is found in the cytoplasm. Its function is as follows. Specifically dimethylates two adjacent adenosines in the loop of a conserved hairpin near the 3'-end of 16S rRNA in the 30S particle. May play a critical role in biogenesis of 30S subunits. This is Probable ribosomal RNA small subunit methyltransferase A from Halobacterium salinarum (strain ATCC 29341 / DSM 671 / R1).